Reading from the N-terminus, the 199-residue chain is Protein extra-macrochaetae (199 aa).

The 53-residue stretch at 23 to 75 (RIQRHPTHRGDGENAEMKMYLSKLKDLVPFMPKNRKLTKLEIIQHVIDYICDL) folds into the bHLH domain. The residue at position 106 (Ser106) is a Phosphoserine. The disordered stretch occupies residues 127-199 (RLNAEQPAKV…QNAEKDSRQS (73 aa)). Over residues 161–182 (QQHQQQQQLQLQQQQLQSQQQL) the composition is skewed to low complexity.

As to quaternary structure, heterodimer with other HLH proteins.

Its subcellular location is the nucleus. Functionally, participates in sensory organ patterning by antagonizing the neurogenic activity of the Achaete-scute complex (AS-C). It lacks a basic DNA-binding domain but is able to form heterodimers with other HLH proteins, thereby inhibiting DNA binding. May sequester proneural proteins in complexes inefficient for DNA interaction. EMC also affects vein differentiation. Inhibits the activity of AS-C proteins by forming an non-DNA binding heterodimer. This is Protein extra-macrochaetae (emc) from Drosophila melanogaster (Fruit fly).